The primary structure comprises 71 residues: Protein CYSTEINE-RICH TRANSMEMBRANE MODULE 4 (71 aa).

The span at 1-12 shows a compositional bias: polar residues; sequence MSQYSQNQSSGA. The tract at residues 1–31 is disordered; the sequence is MSQYSQNQSSGAYPTPPVSTGPYMTPPPLGY. The segment covering 14–30 has biased composition (pro residues); it reads PTPPVSTGPYMTPPPLG. Residues 48–64 form a helical membrane-spanning segment; that stretch reads SKGDGFLKGCLAAMCCC.

Belongs to the CYSTM1 family. In terms of assembly, heterodimers. Interacts with CYSTM6, CYSTM7, CYSTM12 and WIH1/CYSTM13. Mostly expressed in roots, stems, rosette leaves and siliques and, to a lower extent, in flowers and cauline leaves.

The protein resides in the cell membrane. Its subcellular location is the cytoplasm. In terms of biological role, involved in resistance to abiotic stress. In Arabidopsis thaliana (Mouse-ear cress), this protein is Protein CYSTEINE-RICH TRANSMEMBRANE MODULE 4.